Reading from the N-terminus, the 398-residue chain is Beta-1,6-galactosyltransferase GALT29A (398 aa).

The Cytoplasmic portion of the chain corresponds to 1–6 (MKRSVR). The chain crosses the membrane as a helical; Signal-anchor for type II membrane protein span at residues 7 to 27 (PLFSALLFAFFAATLICRVAI). The Lumenal portion of the chain corresponds to 28–398 (RRSSFSFASA…FKIPLVQVYH (371 aa)). N-linked (GlcNAc...) asparagine glycans are attached at residues Asn-221 and Asn-346.

This sequence belongs to the glycosyltransferase 29 family. As to quaternary structure, interacts with GALT31A.

It is found in the golgi apparatus membrane. Functionally, galactosyltransferase involved in the biosynthesis of type II arabinogalactan. Possesses galactosyltransferase (GalT) activity in vitro, transferring galactose from UDP-galactose to a mixture of various oligosaccharides derived from arabinogalactan proteins. Forms a complex with GALT31A that can work cooperatively to enhance the activities of adding galactose residues at O6 positions to beta-1,6-galactan and beta-1,3-galactan. The polypeptide is Beta-1,6-galactosyltransferase GALT29A (Arabidopsis thaliana (Mouse-ear cress)).